A 327-amino-acid chain; its full sequence is Phenylalanine--tRNA ligase alpha subunit (327 aa).

Glu252 is a binding site for Mg(2+).

The protein belongs to the class-II aminoacyl-tRNA synthetase family. Phe-tRNA synthetase alpha subunit type 1 subfamily. As to quaternary structure, tetramer of two alpha and two beta subunits. Mg(2+) serves as cofactor.

It is found in the cytoplasm. The enzyme catalyses tRNA(Phe) + L-phenylalanine + ATP = L-phenylalanyl-tRNA(Phe) + AMP + diphosphate + H(+). The polypeptide is Phenylalanine--tRNA ligase alpha subunit (Yersinia pestis bv. Antiqua (strain Antiqua)).